Consider the following 264-residue polypeptide: Phosphate import ATP-binding protein PstB (264 aa).

In terms of domain architecture, ABC transporter spans 11 to 250 (LKAEALSVYY…DTTEKIFDSP (240 aa)). ATP is bound at residue 43-50 (GPSGCGKS).

This sequence belongs to the ABC transporter superfamily. Phosphate importer (TC 3.A.1.7) family. As to quaternary structure, the complex is composed of two ATP-binding proteins (PstB), two transmembrane proteins (PstC and PstA) and a solute-binding protein (PstS).

The protein resides in the cell inner membrane. The enzyme catalyses phosphate(out) + ATP + H2O = ADP + 2 phosphate(in) + H(+). Its function is as follows. Part of the ABC transporter complex PstSACB involved in phosphate import. Responsible for energy coupling to the transport system. The polypeptide is Phosphate import ATP-binding protein PstB (Synechococcus elongatus (strain ATCC 33912 / PCC 7942 / FACHB-805) (Anacystis nidulans R2)).